The primary structure comprises 839 residues: Taste receptor type 1 member 2 (839 aa).

The signal sequence occupies residues 1-19 (MGPRATTICSLFFLLWVLA). The Extracellular segment spans residues 20–566 (EPAENSDFYL…AFLEWHEAPT (547 aa)). Residues Asn-84, Asn-248, Asn-292, Asn-312, Asn-368, Asn-428, Asn-487, and Asn-527 are each glycosylated (N-linked (GlcNAc...) asparagine). The helical transmembrane segment at 567–587 (IAVALLAALGFLSTLAILVIF) threads the bilayer. At 588–602 (WRHFQTPMVRSAGGP) the chain is on the cytoplasmic side. The helical transmembrane segment at 603-623 (MCFLMLTLLLVAYMVVPVYVG) threads the bilayer. Topologically, residues 624 to 635 (PPKVSTCLCRQA) are extracellular. A helical transmembrane segment spans residues 636-656 (LFPLCFTICISCIAVRSFQII). The Cytoplasmic portion of the chain corresponds to 657–681 (CAFKMASRFPRAYSYWVRYQGPYVS). Residues 682–702 (MAFITVLKMVIVVIGMLATGL) traverse the membrane as a helical segment. Topologically, residues 703–727 (NPTTRTDPDDPKIMIVSCNPNYRNS) are extracellular. Residues 728–748 (LLFNTSLDLLLSVVGFSFANM) form a helical membrane-spanning segment. The Cytoplasmic segment spans residues 749-760 (GKELPTNYNEAK). A helical membrane pass occupies residues 761-781 (FITLSMTFYFTSSISLCTFMS). Residues 782–784 (AYS) are Extracellular-facing. The helical transmembrane segment at 785-805 (GVLVTIVDLLVTVLNLLAISL) threads the bilayer. Residues 806-839 (GYFGPKCYMILFYPERNTPAYFNSVIQGYTMTRD) are Cytoplasmic-facing.

It belongs to the G-protein coupled receptor 3 family. TAS1R subfamily. Forms heterodimers with TAS1R3.

It is found in the cell membrane. Putative taste receptor. TAS1R2/TAS1R3 recognizes diverse natural and synthetic sweeteners. This is Taste receptor type 1 member 2 (TAS1R2) from Pongo pygmaeus (Bornean orangutan).